We begin with the raw amino-acid sequence, 494 residues long: 3-octaprenyl-4-hydroxybenzoate carboxy-lyase (494 aa).

Asn-172 serves as a coordination point for Mn(2+). Prenylated FMN contacts are provided by residues 175–177, 189–191, and 194–195; these read IYR, RWL, and RG. Glu-238 contacts Mn(2+). Asp-294 acts as the Proton donor in catalysis.

Belongs to the UbiD family. In terms of assembly, homohexamer. The cofactor is prenylated FMN. Mn(2+) is required as a cofactor.

The protein resides in the cell membrane. The enzyme catalyses a 4-hydroxy-3-(all-trans-polyprenyl)benzoate + H(+) = a 2-(all-trans-polyprenyl)phenol + CO2. It participates in cofactor biosynthesis; ubiquinone biosynthesis. Functionally, catalyzes the decarboxylation of 3-octaprenyl-4-hydroxy benzoate to 2-octaprenylphenol, an intermediate step in ubiquinone biosynthesis. This chain is 3-octaprenyl-4-hydroxybenzoate carboxy-lyase, found in Albidiferax ferrireducens (strain ATCC BAA-621 / DSM 15236 / T118) (Rhodoferax ferrireducens).